We begin with the raw amino-acid sequence, 182 residues long: Ribosome-recycling factor (182 aa).

The protein belongs to the RRF family.

The protein localises to the cytoplasm. In terms of biological role, responsible for the release of ribosomes from messenger RNA at the termination of protein biosynthesis. May increase the efficiency of translation by recycling ribosomes from one round of translation to another. The protein is Ribosome-recycling factor of Prochlorococcus marinus (strain MIT 9312).